Here is a 103-residue protein sequence, read N- to C-terminus: Histone H4 variant TH091 (103 aa).

A disordered region spans residues 1 to 20 (MSGRDKGGKGLGKGGAKRHR). Ser-2 is subject to N-acetylserine. Residues Lys-6, Lys-9, Lys-13, Lys-17, and Lys-21 each carry the N6-acetyllysine modification. A DNA-binding region spans residues 17-21 (KRHRK).

The protein belongs to the histone H4 family. The nucleosome is a histone octamer containing two molecules each of H2A, H2B, H3 and H4 assembled in one H3-H4 heterotetramer and two H2A-H2B heterodimers. The octamer wraps approximately 147 bp of DNA.

It is found in the nucleus. The protein resides in the chromosome. Its function is as follows. Core component of nucleosome. Nucleosomes wrap and compact DNA into chromatin, limiting DNA accessibility to the cellular machineries which require DNA as a template. Histones thereby play a central role in transcription regulation, DNA repair, DNA replication and chromosomal stability. DNA accessibility is regulated via a complex set of post-translational modifications of histones, also called histone code, and nucleosome remodeling. In Triticum aestivum (Wheat), this protein is Histone H4 variant TH091.